A 227-amino-acid chain; its full sequence is UPF0173 metal-dependent hydrolase BALH_4194 (227 aa).

This sequence belongs to the UPF0173 family.

In Bacillus thuringiensis (strain Al Hakam), this protein is UPF0173 metal-dependent hydrolase BALH_4194.